A 232-amino-acid chain; its full sequence is 5'-methylthioadenosine/S-adenosylhomocysteine nucleosidase (232 aa).

The Proton acceptor role is filled by Glu12. Residues Gly78, Ile152, and Met173–Glu174 each bind substrate. Asp197 serves as the catalytic Proton donor.

Belongs to the PNP/UDP phosphorylase family. MtnN subfamily. In terms of assembly, homodimer.

The catalysed reaction is S-adenosyl-L-homocysteine + H2O = S-(5-deoxy-D-ribos-5-yl)-L-homocysteine + adenine. The enzyme catalyses S-methyl-5'-thioadenosine + H2O = 5-(methylsulfanyl)-D-ribose + adenine. It catalyses the reaction 5'-deoxyadenosine + H2O = 5-deoxy-D-ribose + adenine. It functions in the pathway amino-acid biosynthesis; L-methionine biosynthesis via salvage pathway; S-methyl-5-thio-alpha-D-ribose 1-phosphate from S-methyl-5'-thioadenosine (hydrolase route): step 1/2. In terms of biological role, catalyzes the irreversible cleavage of the glycosidic bond in both 5'-methylthioadenosine (MTA) and S-adenosylhomocysteine (SAH/AdoHcy) to adenine and the corresponding thioribose, 5'-methylthioribose and S-ribosylhomocysteine, respectively. Also cleaves 5'-deoxyadenosine, a toxic by-product of radical S-adenosylmethionine (SAM) enzymes, into 5-deoxyribose and adenine. Thus, is required for in vivo function of the radical SAM enzymes biotin synthase and lipoic acid synthase, that are inhibited by 5'-deoxyadenosine accumulation. The polypeptide is 5'-methylthioadenosine/S-adenosylhomocysteine nucleosidase (Salmonella paratyphi B (strain ATCC BAA-1250 / SPB7)).